The primary structure comprises 196 residues: Calcineurin B homologous protein 2 (196 aa).

A lipid anchor (N-myristoyl glycine) is attached at glycine 2. EF-hand domains lie at 26–61 (ASLL…AVNP), 71–106 (FPNG…PKQP), 111–146 (SRMN…MVGV), and 152–187 (QLES…MNIE). The residue at position 27 (serine 27) is a Phosphoserine. Positions 124, 126, 128, 130, and 135 each coordinate Ca(2+). A Nuclear export signal motif is present at residues 137–148 (LQVLRLMVGVQV). Positions 165, 167, 169, and 176 each coordinate Ca(2+).

The protein belongs to the calcineurin regulatory subunit family. CHP subfamily. In terms of assembly, interacts with PPP3CA. Interacts with SLC9A1/NHE1; the interaction occurs in a calcium-dependent manner. Interacts with SLC9A1/NHE1.

Its subcellular location is the cytoplasm. The protein localises to the nucleus. The protein resides in the cell membrane. Functionally, functions as an integral cofactor in cell pH regulation by controlling plasma membrane-type Na(+)/H(+) exchange activity. Binds to and activates SLC9A1/NHE1 in a serum-independent manner, thus increasing pH and protecting cells from serum deprivation-induced death. Also plays a role in the regulation of cell proliferation and tumor growth by increasing the phosphatase activity of PPP3CA in a calcium-dependent manner. Activator of the calcineurin/NFAT signaling pathway. Involved in the cytoplasmic translocation of the transcription factor NFATC3 to the nucleus. This chain is Calcineurin B homologous protein 2 (Chp2), found in Mus musculus (Mouse).